A 158-amino-acid polypeptide reads, in one-letter code: Ribosome maturation factor RimP (158 aa).

It belongs to the RimP family.

Its subcellular location is the cytoplasm. Its function is as follows. Required for maturation of 30S ribosomal subunits. The sequence is that of Ribosome maturation factor RimP from Pseudomonas syringae pv. tomato (strain ATCC BAA-871 / DC3000).